Here is a 449-residue protein sequence, read N- to C-terminus: Glucose-6-phosphate isomerase (449 aa).

E291 acts as the Proton donor in catalysis. Residues H312 and K426 contribute to the active site.

Belongs to the GPI family.

Its subcellular location is the cytoplasm. The enzyme catalyses alpha-D-glucose 6-phosphate = beta-D-fructose 6-phosphate. It participates in carbohydrate biosynthesis; gluconeogenesis. It functions in the pathway carbohydrate degradation; glycolysis; D-glyceraldehyde 3-phosphate and glycerone phosphate from D-glucose: step 2/4. Catalyzes the reversible isomerization of glucose-6-phosphate to fructose-6-phosphate. The sequence is that of Glucose-6-phosphate isomerase from Clostridium botulinum (strain Alaska E43 / Type E3).